Reading from the N-terminus, the 307-residue chain is D-alanine--D-alanine ligase (307 aa).

The region spanning 101–301 (KDVLRAAGVP…FGELVRWMVE (201 aa)) is the ATP-grasp domain. 128 to 182 (MTPPYVVKPLGEGSSFGVIIVRADQTHPPQELTRDDWAYGDLVLVERFVAGRELT) is an ATP binding site. Residues aspartate 251, glutamate 268, and asparagine 270 each contribute to the Mg(2+) site.

The protein belongs to the D-alanine--D-alanine ligase family. Mg(2+) serves as cofactor. The cofactor is Mn(2+).

The protein resides in the cytoplasm. It carries out the reaction 2 D-alanine + ATP = D-alanyl-D-alanine + ADP + phosphate + H(+). The protein operates within cell wall biogenesis; peptidoglycan biosynthesis. Functionally, cell wall formation. The polypeptide is D-alanine--D-alanine ligase (Methylocella silvestris (strain DSM 15510 / CIP 108128 / LMG 27833 / NCIMB 13906 / BL2)).